A 2758-amino-acid chain; its full sequence is Highly reducing polyketide synthase NEC1 (2758 aa).

In terms of domain architecture, Ketosynthase family 3 (KS3) spans 153–492 (EASSPIIGLD…GSNAHVVMDD (340 aa)). The disordered stretch occupies residues 512–576 (PRLPGSSSSR…NTDTLQTTDT (65 aa)). Low complexity predominate over residues 566–576 (TNTDTLQTTDT). Positions 700–1044 (VFTGQGAQWP…GYATVLKRGD (345 aa)) are malonyl-CoA:ACP transacylase (MAT) domain. Serine 790 functions as the For malonyltransferase activity in the catalytic mechanism. An N-terminal hotdog fold region spans residues 1124 to 1255 (HELLGAPVPD…GFVRTEYSQT (132 aa)). Residues 1124-1442 (HELLGAPVPD…VFKTIPNTAS (319 aa)) form a dehydratase (DH) domain region. The PKS/mFAS DH domain occupies 1124–1443 (HELLGAPVPD…FKTIPNTASS (320 aa)). Histidine 1156 (proton acceptor; for dehydratase activity) is an active-site residue. The tract at residues 1283–1443 (TSMVHADKVY…FKTIPNTASS (161 aa)) is C-terminal hotdog fold. Aspartate 1351 (proton donor; for dehydratase activity) is an active-site residue. Residues 1622-1727 (LEVGGGTGGA…RKLLKPGGKL (106 aa)) form a methyltransferase (CMet) domain region. Residues 2031–2344 (GTADVCFSED…LGKGEDAVVL (314 aa)) form an enoyl reductase (ER) domain region. Residues 2372 to 2553 (ASYMVVGGLG…PVAVSLDLPV (182 aa)) form a ketoreductase (KR) domain region. The Carrier domain maps to 2673 to 2750 (EAQAVVLDAL…ALAAAVAGRS (78 aa)). At serine 2710 the chain carries O-(pantetheine 4'-phosphoryl)serine.

Its function is as follows. Highly reducing polyketide synthase; part of the gene cluster that mediates the biosynthesis of nectriapyrone and its analogs phomopyrone A, acropyrone and zaepyrone. The nectriapyrone biosynthetic gene cluster consists of two genes, the highly reducing polyketide synthase NEC1 that produces a demethylated analog of nectriapyrone from one unit of acetyl-CoA and one unit of malonyl-CoA; and the O-methyltransferase NEC2 that further methylates the NEC1 product to yield nectriapyrone. Nectriapyrone is further hydrolyzed to nectriapyrone D, also known as gulypyrone B, by an unidentified hydrolase localized outside the nectriapyrone cluster. This Pyricularia oryzae (strain 70-15 / ATCC MYA-4617 / FGSC 8958) (Rice blast fungus) protein is Highly reducing polyketide synthase NEC1.